The following is a 174-amino-acid chain: Peptide deformylase (174 aa).

The Fe cation site is built by Cys96 and His138. Glu139 is an active-site residue. His142 is a Fe cation binding site.

This sequence belongs to the polypeptide deformylase family. Fe(2+) serves as cofactor.

The catalysed reaction is N-terminal N-formyl-L-methionyl-[peptide] + H2O = N-terminal L-methionyl-[peptide] + formate. In terms of biological role, removes the formyl group from the N-terminal Met of newly synthesized proteins. Requires at least a dipeptide for an efficient rate of reaction. N-terminal L-methionine is a prerequisite for activity but the enzyme has broad specificity at other positions. This Helicobacter pylori (strain J99 / ATCC 700824) (Campylobacter pylori J99) protein is Peptide deformylase.